The primary structure comprises 824 residues: Mucosa-associated lymphoid tissue lymphoma translocation protein 1 (824 aa).

The interval 1-27 is disordered; sequence MSLLGDPLQALPPSAAPTGPLLAPPAG. Serine 2 is modified (N-acetylserine). Residues 11-27 are compositionally biased toward low complexity; that stretch reads LPPSAAPTGPLLAPPAG. One can recognise a Death domain in the interval 39–126; that stretch reads RRLSELLDQA…EVLQLLSPPG (88 aa). 2 Ig-like C2-type domains span residues 125-201 and 212-305; these read PGIK…FEFS and PESF…KKVE. Serine 135 carries the post-translational modification Phosphoserine. Disulfide bonds link cysteine 147–cysteine 190 and cysteine 248–cysteine 290. Positions 348–562 are caspase-like; it reads IGNMNYREHP…SLSEKRALTD (215 aa). The Nuclear export signal signature appears at 369 to 376; it reads LTNLLRQL. Catalysis depends on residues histidine 415 and cysteine 464.

This sequence belongs to the peptidase C14B family. As to quaternary structure, homooligomer; forms oligomers which bind to TRAF6. Forms a complex with CARD14 and MALT1; resulting in the formation of a CBM (CARD14-BCL10-MALT1) complex. Forms a complex with CARD11 and MALT1; resulting in the formation of a CBM (CARD11-BCL10-MALT1) complex. Forms a complex with CARD9 and MALT1; resulting in the formation of a CBM (CARD9-BCL10-MALT1) complex. As to expression, highly expressed in peripheral blood mononuclear cells. Detected at lower levels in bone marrow, thymus and lymph node, and at very low levels in colon and lung.

It localises to the cytoplasm. Its subcellular location is the perinuclear region. The protein resides in the nucleus. In terms of biological role, protease that enhances BCL10-induced activation: acts via formation of CBM complexes that channel adaptive and innate immune signaling downstream of CARD domain-containing proteins (CARD9, CARD11 and CARD14) to activate NF-kappa-B and MAP kinase p38 pathways which stimulate expression of genes encoding pro-inflammatory cytokines and chemokines. Mediates BCL10 cleavage: MALT1-dependent BCL10 cleavage plays an important role in T-cell antigen receptor-induced integrin adhesion. Involved in the induction of T helper 17 cells (Th17) differentiation. Cleaves RC3H1 and ZC3H12A in response to T-cell receptor (TCR) stimulation which releases their cooperatively repressed targets to promote Th17 cell differentiation. Also mediates cleavage of N4BP1 in T-cells following TCR-mediated activation, leading to N4BP1 inactivation. May also have ubiquitin ligase activity: binds to TRAF6, inducing TRAF6 oligomerization and activation of its ligase activity. The protein is Mucosa-associated lymphoid tissue lymphoma translocation protein 1 of Homo sapiens (Human).